The sequence spans 447 residues: Xylose isomerase (447 aa).

Catalysis depends on residues histidine 102 and aspartate 105. Positions 233, 269, 272, 297, 308, 310, and 340 each coordinate Mg(2+).

It belongs to the xylose isomerase family. Homotetramer. Requires Mg(2+) as cofactor.

The protein resides in the cytoplasm. It carries out the reaction alpha-D-xylose = alpha-D-xylulofuranose. The polypeptide is Xylose isomerase (Pediococcus pentosaceus (strain ATCC 25745 / CCUG 21536 / LMG 10740 / 183-1w)).